The sequence spans 239 residues: Fatty acid metabolism regulator protein (239 aa).

Positions Gln-6–Phe-74 constitute an HTH gntR-type domain. The H-T-H motif DNA-binding region spans Glu-34–Gln-53.

As to quaternary structure, homodimer.

It localises to the cytoplasm. Its function is as follows. Multifunctional regulator of fatty acid metabolism. This Pectobacterium atrosepticum (strain SCRI 1043 / ATCC BAA-672) (Erwinia carotovora subsp. atroseptica) protein is Fatty acid metabolism regulator protein.